The chain runs to 274 residues: 2,3,4,5-tetrahydropyridine-2,6-dicarboxylate N-succinyltransferase (274 aa).

Substrate contacts are provided by R104 and D141.

This sequence belongs to the transferase hexapeptide repeat family. In terms of assembly, homotrimer.

The protein resides in the cytoplasm. The enzyme catalyses (S)-2,3,4,5-tetrahydrodipicolinate + succinyl-CoA + H2O = (S)-2-succinylamino-6-oxoheptanedioate + CoA. Its pathway is amino-acid biosynthesis; L-lysine biosynthesis via DAP pathway; LL-2,6-diaminopimelate from (S)-tetrahydrodipicolinate (succinylase route): step 1/3. This chain is 2,3,4,5-tetrahydropyridine-2,6-dicarboxylate N-succinyltransferase, found in Escherichia coli O6:H1 (strain CFT073 / ATCC 700928 / UPEC).